We begin with the raw amino-acid sequence, 878 residues long: NUT family member 2E (878 aa).

Disordered regions lie at residues 273 to 324, 417 to 511, 527 to 560, 622 to 757, and 775 to 878; these read WSQG…DDSC, QKSQ…VPEE, LLGP…PPDP, RLPP…EEEE, and WLPQ…HCSQ. Composition is skewed to pro residues over residues 278 to 288 and 427 to 444; these read PLPPPPPPAAQ and CLPP…PPAP. Basic and acidic residues-rich tracts occupy residues 537–551 and 622–631; these read EPEK…KQPQ and RLPPLKEKQH.

Belongs to the NUT family.

This is NUT family member 2E (NUTM2E) from Homo sapiens (Human).